Here is a 636-residue protein sequence, read N- to C-terminus: C-terminal binding protein AN (636 aa).

A disordered region spans residues 1–21 (MSKIRSSATMPHRDQPSPASP). NAD(+)-binding positions include Ser91, 147–148 (WL), 169–174 (VGRSVS), Asp193, 231–237 (CALTNDT), 258–260 (TGS), Asp284, and 307–311 (RSADY). A disordered region spans residues 341–489 (VSDEEVEESE…PLEVMQESSP (149 aa)). The segment covering 342–357 (SDEEVEESEASEEEEQ) has biased composition (acidic residues). Polar residues predominate over residues 369–384 (ESTSRQQGESTLTSTE). Residues 385-395 (IVRREASELKE) are compositionally biased toward basic and acidic residues. Over residues 398–409 (SPGQQHVSQNTA) the composition is skewed to polar residues. Over residues 417–429 (SRSGKKAKKRHSQ) the composition is skewed to basic residues. The segment covering 430–445 (QKYMQKTDGSSGLNEE) has biased composition (polar residues). Positions 470 to 480 (SPEDSRSRKTP) are enriched in basic and acidic residues.

It belongs to the D-isomer specific 2-hydroxyacid dehydrogenase family. Plant AN subfamily. Homodimer. Interacts with KCBP and SUB (via intra-cellular domain); AN is not required for the correct subcellular localization and recycling of SUB. Binds to SOKs proteins polymers (e.g. SOK1, SOK2, SOK3 and SOK4). Interacts with IPGA1 on microtubule upon mechanical stress to regulate microtubule organization. NAD(+) serves as cofactor. As to expression, expressed in cotyledons, leaves, roots, stems and floral buds.

Its subcellular location is the cytoplasm. The protein localises to the golgi apparatus. It localises to the trans-Golgi network. The protein resides in the cytoskeleton. Its function is as follows. Involved in controlling the equilibrium between tubular and stacked structures in the Golgi complex. Required for cortical microtubules (MTs) arrangement that confers cell shape. Cooperatively with IPGA1, negatively regulates cortical microtubules (CMTs) organization in response to mechanical stress and modulates pavement cells morphogenesis leading to puzzle shape, probably in an AAA1/KTN1-dependent manner. Regulates the width of leaves by controlling the polar elongation of leaf cells. Involved in the regulation of trichome branching. Seems to not be able to regulate gene transcription. Regulates epidermal cell divisions and elongation in a non-cell-autonomous manner (regulated by subepidermal cells), but regulates epidermal cell polarity, shape, trichome branching and elongation in a cell-autonomous manner. Negatively regulates growth in the petiole elongation. Prevents lipid peroxidation as a result of abiotic stress response. Is involved in the SUB-dependent signaling mechanism and may act in a membrane trafficking event around the trans-Golgi network. The protein is C-terminal binding protein AN of Arabidopsis thaliana (Mouse-ear cress).